Consider the following 197-residue polypeptide: MTSLYLASGSPRRQELLAQLGVTFERIVTGIEEQRQPQESAQQYVVRLAREKAQAGVAQTAQDLPVLGADTIVILNGEVLEKPRDAEHAAQMLRKLSGQTHQVMTAVALADSQHILDCLVVTDVTFRTLTDEDIAGYVASGEPLDKAGAYGIQGLGGCFVRKINGSYHAVVGLPLVETYELLSNFNALREKRDKHDG.

The Proton acceptor role is filled by aspartate 70.

The protein belongs to the Maf family. YhdE subfamily. It depends on a divalent metal cation as a cofactor.

The protein localises to the cytoplasm. It carries out the reaction dTTP + H2O = dTMP + diphosphate + H(+). The enzyme catalyses UTP + H2O = UMP + diphosphate + H(+). In terms of biological role, nucleoside triphosphate pyrophosphatase that hydrolyzes dTTP and UTP. May have a dual role in cell division arrest and in preventing the incorporation of modified nucleotides into cellular nucleic acids. In Shigella sonnei (strain Ss046), this protein is dTTP/UTP pyrophosphatase (yceF2).